A 1154-amino-acid polypeptide reads, in one-letter code: Kinesin-like protein KIN-7E, chloroplastic (1154 aa).

Low complexity-rich tracts occupy residues 1–14 (MSSSSRPGRASISP) and 29–109 (VAAA…PPVA). The transit peptide at 1-21 (MSSSSRPGRASISPFRSRRTS) directs the protein to the chloroplast. The segment at 1–109 (MSSSSRPGRA…RAAGRAPPVA (109 aa)) is disordered. One can recognise a Kinesin motor domain in the interval 119–437 (NIMVTVRFRP…LKFAHRSKHI (319 aa)). Residue 199–206 (GVTSSGKT) participates in ATP binding. The stretch at 441–523 (ASQNKIIDEK…AALMGRIQRL (83 aa)) forms a coiled coil. Positions 620-674 (LSTSVDSESTASGSPSFSRSSQQKHPLLDLKDGRRKSMTRKGDDPALTDSFPGRT) are disordered. Positions 628–640 (STASGSPSFSRSS) are enriched in low complexity. Coiled-coil stretches lie at residues 734 to 761 (DSQIQEQIEKLKNEIDEKKSHIRVLEQR) and 801 to 845 (ADNR…DNVA). Positions 838-885 (AKNEDNVASMQSSEPSSTSSNPRDLANEVASHSKMPSRTTEDHTESPL) are disordered. Positions 846-857 (SMQSSEPSSTSS) are enriched in low complexity. Residues 894–967 (AEIENLKLDK…DLAAAKDQTR (74 aa)) adopt a coiled-coil conformation.

Belongs to the TRAFAC class myosin-kinesin ATPase superfamily. Kinesin family. KIN-7 subfamily.

Its subcellular location is the plastid. It localises to the chloroplast. The protein is Kinesin-like protein KIN-7E, chloroplastic of Oryza sativa subsp. japonica (Rice).